We begin with the raw amino-acid sequence, 490 residues long: Bifunctional protein HldE (490 aa).

Positions 1-330 (MFSFDALLQA…RRILPHASLA (330 aa)) are ribokinase. 205 to 208 (NRKE) lines the ATP pocket. Asp275 is a catalytic residue. The cytidylyltransferase stretch occupies residues 358–490 (FTNGCFDILH…LVARAREGQS (133 aa)).

In the N-terminal section; belongs to the carbohydrate kinase PfkB family. This sequence in the C-terminal section; belongs to the cytidylyltransferase family. As to quaternary structure, homodimer.

It catalyses the reaction D-glycero-beta-D-manno-heptose 7-phosphate + ATP = D-glycero-beta-D-manno-heptose 1,7-bisphosphate + ADP + H(+). The catalysed reaction is D-glycero-beta-D-manno-heptose 1-phosphate + ATP + H(+) = ADP-D-glycero-beta-D-manno-heptose + diphosphate. It participates in nucleotide-sugar biosynthesis; ADP-L-glycero-beta-D-manno-heptose biosynthesis; ADP-L-glycero-beta-D-manno-heptose from D-glycero-beta-D-manno-heptose 7-phosphate: step 1/4. It functions in the pathway nucleotide-sugar biosynthesis; ADP-L-glycero-beta-D-manno-heptose biosynthesis; ADP-L-glycero-beta-D-manno-heptose from D-glycero-beta-D-manno-heptose 7-phosphate: step 3/4. Its function is as follows. Catalyzes the phosphorylation of D-glycero-D-manno-heptose 7-phosphate at the C-1 position to selectively form D-glycero-beta-D-manno-heptose-1,7-bisphosphate. In terms of biological role, catalyzes the ADP transfer from ATP to D-glycero-beta-D-manno-heptose 1-phosphate, yielding ADP-D-glycero-beta-D-manno-heptose. In Rhodopseudomonas palustris (strain ATCC BAA-98 / CGA009), this protein is Bifunctional protein HldE.